The sequence spans 59 residues: Venom protein 27.7 (59 aa).

An N-terminal signal peptide occupies residues 1-29 (MTFITLTIGLSLRTIFLIFIFLPPPHLLA).

This sequence belongs to the non-disulfide-bridged peptide (NDBP) superfamily. As to expression, expressed by the venom gland.

The protein localises to the secreted. This chain is Venom protein 27.7, found in Lychas mucronatus (Chinese swimming scorpion).